A 333-amino-acid polypeptide reads, in one-letter code: NADH-ubiquinone oxidoreductase chain 2 (333 aa).

10 consecutive transmembrane segments (helical) span residues 10-30 (WFIYFLITIFVLMMNSNNIFI), 57-77 (LIYYSVSVISSIFLFFMIIVY), 91-111 (FMVQMMFFLKIGTFPFHFWMI), 121-141 (QIFLMSTLIKFIPIYMMVSMT), 143-163 (INSWTLYFLITNSLYISFYAN), 170-190 (KLLACSTIFNSFYFIFILELN), 192-212 (NMFIAMIILYSFNYFLLISFL), 242-262 (MYPIFLSFVIKWNLIFMMVSV), 267-287 (WILFLLMISSMLMIWNYIIIL), and 313-333 (SYFALTLLSFNISFFITLNFL).

The protein belongs to the complex I subunit 2 family.

It is found in the mitochondrion inner membrane. The enzyme catalyses a ubiquinone + NADH + 5 H(+)(in) = a ubiquinol + NAD(+) + 4 H(+)(out). Core subunit of the mitochondrial membrane respiratory chain NADH dehydrogenase (Complex I) that is believed to belong to the minimal assembly required for catalysis. Complex I functions in the transfer of electrons from NADH to the respiratory chain. The immediate electron acceptor for the enzyme is believed to be ubiquinone. The protein is NADH-ubiquinone oxidoreductase chain 2 (ND2) of Apis mellifera ligustica (Common honeybee).